The chain runs to 618 residues: Syncytin-B (618 aa).

The N-terminal stretch at 1 to 17 (MTGFWVLCFVLFPSSLS) is a signal peptide. The Extracellular portion of the chain corresponds to 18 to 545 (YPESWMPLVN…SWGQWPDLGR (528 aa)). Residue asparagine 27 is glycosylated (N-linked (GlcNAc...) asparagine). Residues 44-47 (CWVC) carry the CXXC motif. 3 disulfides stabilise this stretch: cysteine 44-cysteine 47, cysteine 44-cysteine 507, and cysteine 499-cysteine 506. 3 N-linked (GlcNAc...) asparagine glycosylation sites follow: asparagine 184, asparagine 274, and asparagine 357. The interval 422–442 (LFPFLAGLGISSALGTGIAGL) is fusion peptide. Positions 482 to 498 (LQNRRALDLITAEKGGT) are immunosuppression. A CX6CC motif is present at residues 499–507 (CLFLQEECC). Residues 546-566 (WLPWLTPFLGPLLFLFFLLTF) form a helical membrane-spanning segment. Topologically, residues 567–618 (GSCLLNCLTRFVSQRLGSFVQDTAKRHVDSILQNFQYKKLPQDSPDEDTIPT) are cytoplasmic.

It belongs to the gamma type-C retroviral envelope protein family. As to quaternary structure, the mature protein consists of a trimer of SU-TM heterodimers. The SU-TM heterodimers are attached by a labile interchain disulfide bond. Post-translationally, synthesized as an inactive precursor that is heavily N-glycosylated and processed likely by furin in the Golgi to yield the mature SU and TM proteins. The cleavage site between SU and TM requires the minimal sequence [KR]-X-[KR]-R. The CXXC motif is highly conserved across a broad range of retroviral envelope proteins. It is thought to participate in the formation of a labile disulfide bond possibly with the CX6CC motif present in the transmembrane protein. Isomerization of the intersubunit disulfide bond to an SU intrachain disulfide bond is thought to occur upon receptor recognition in order to allow membrane fusion. As to expression, highly expressed in placenta where it localizes to syncytiotrophoblasts of the labyrinthine zona. Specifically localizes to syncytiotrophoblast layer II (SynT-II). Also detected at very low levels in ovary.

The protein localises to the cell membrane. In terms of biological role, this endogenous retroviral envelope protein has retained its original fusogenic properties. Together with Syna, participates in trophoblast fusion and the formation of a syncytium during placenta morphogenesis. Synb is specifically involved in formation of syncytiotrophoblast layer II (SynT-II). Promotes myoblast fusion, and may play a role in regeneration of damaged muscle tissue in males. May have immunosuppressive activity. This Mus musculus (Mouse) protein is Syncytin-B.